Here is a 540-residue protein sequence, read N- to C-terminus: Cytosolic carboxypeptidase 6 (540 aa).

Residues 167 to 438 (YPYTYTRFQH…NVARTFLDYY (272 aa)) enclose the Peptidase M14 domain. Residues H230, E233, and H328 each contribute to the Zn(2+) site. E401 serves as the catalytic Proton donor/acceptor.

This sequence belongs to the peptidase M14 family. As to quaternary structure, interacts with MYLK. It depends on Zn(2+) as a cofactor. As to expression, widely expressed. Expressed abundantly in testis, pituitary and brain and to a lower extent in eye, stomach, adrenal and kidney. In brain, expressed at low level in cerebellum as compared to cortex.

The protein resides in the cytoplasm. Its subcellular location is the cytosol. It localises to the cytoskeleton. It is found in the microtubule organizing center. The protein localises to the centrosome. The protein resides in the centriole. Its subcellular location is the golgi apparatus. It localises to the cilium basal body. It carries out the reaction (L-glutamyl)(n+1)-gamma-L-glutamyl-L-glutamyl-[protein] + H2O = (L-glutamyl)(n)-gamma-L-glutamyl-L-glutamyl-[protein] + L-glutamate. The enzyme catalyses C-terminal L-alpha-aminoacyl-L-glutamyl-L-glutamyl-[tubulin] + H2O = C-terminal L-alpha-aminoacyl-L-glutamyl-[tubulin] + L-glutamate. In terms of biological role, metallocarboxypeptidase that mediates protein deglutamylation of tubulin and non-tubulin target proteins. Catalyzes the removal of polyglutamate side chains present on the gamma-carboxyl group of glutamate residues within the C-terminal tail of tubulin protein. Specifically cleaves tubulin long-side-chains, while it is not able to remove the branching point glutamate. Also catalyzes the removal of polyglutamate residues from the carboxy-terminus of non-tubulin proteins such as MYLK. Mediates the deglutamylation of nucleotidyltransferase CGAS, leading to CGAS antiviral defense response activation. Involved in KLF4 deglutamylation which promotes KLF4 proteasome-mediated degradation, thereby negatively regulating cell pluripotency maintenance and embryogenesis. This Mus musculus (Mouse) protein is Cytosolic carboxypeptidase 6.